Here is a 78-residue protein sequence, read N- to C-terminus: Major outer membrane lipoprotein Lpp (78 aa).

The N-terminal stretch at 1–20 (MNRTKLVLGAVILGSTLLAG) is a signal peptide. Residue cysteine 21 is the site of N-palmitoyl cysteine attachment. The S-diacylglycerol cysteine moiety is linked to residue cysteine 21. 2 consecutive repeats follow at residues 24-34 (NAKIDQLSSDV) and 38-48 (NAKVDQLSNDV). The stretch at 27–75 (IDQLSSDVQTLNAKVDQLSNDVNAIRSDVQAAKDDAARANQRLDNQVRT) forms a coiled coil. At lysine 78 the chain carries N6-murein peptidoglycan lysine.

Belongs to the Lpp family. As to quaternary structure, homotrimer.

It is found in the cell outer membrane. It localises to the secreted. Its subcellular location is the cell wall. Its function is as follows. A highly abundant outer membrane lipoprotein that controls the distance between the inner and outer membranes. The only protein known to be covalently linked to the peptidoglycan network (PGN). Also non-covalently binds the PGN. The link between the cell outer membrane and PGN contributes to maintenance of the structural and functional integrity of the cell envelope, and maintains the correct distance between the PGN and the outer membrane. The polypeptide is Major outer membrane lipoprotein Lpp (Pectobacterium atrosepticum (strain SCRI 1043 / ATCC BAA-672) (Erwinia carotovora subsp. atroseptica)).